Reading from the N-terminus, the 499-residue chain is Neuronal acetylcholine receptor subunit alpha-7 (499 aa).

An N-terminal signal peptide occupies residues 1–19 (MRGSLCLALAASILHVSLQ). At 20-230 (GEFQRKLYKD…VSIRRRTLYY (211 aa)) the chain is on the extracellular side. Ca(2+) is bound by residues Arg39 and Val41. Residues Asn43, Asn87, and Asn130 are each glycosylated (N-linked (GlcNAc...) asparagine). The cysteines at positions 147 and 161 are disulfide-linked. Residues Ser169 and Tyr207 each contribute to the Ca(2+) site. Residues Cys209 and Cys210 are joined by a disulfide bond. The next 3 membrane-spanning stretches (helical) occupy residues 231 to 251 (GLNLLIPCVLISALALLVFLL), 259 to 279 (ISLGITVLLSLTVFMLLVAEI), and 292 to 312 (QYFASTMIIVGLSVVVTVIVL). Residues 257-264 (EKISLGIT) are essential for TMEM35A/NACHO-mediated proper subunit assembly and trafficking to cell membrane. The Cytoplasmic segment spans residues 313–466 (QYHHHDPDGG…WKFAACVVDR (154 aa)). The helical transmembrane segment at 467–487 (LCLMAFSVFTILCTIGILMSA) threads the bilayer.

It belongs to the ligand-gated ion channel (TC 1.A.9) family. Acetylcholine receptor (TC 1.A.9.1) subfamily. Alpha-7/CHRNA7 sub-subfamily. In terms of assembly, homopentamer. Homooligomer of the short form gives rise to unfunctional channels, as does coexpression of both long and short forms of the receptor. Can also form heteropentamers with CHRNB2, mainly found in basal forebrain cholinergic neurons. Interacts with RIC3; which is required for proper folding and assembly. Interacts with LYPD6. Interacts with CANX. Post-translationally, glycosylations at Asn-43, Asn-87 and Asn-130 are essential for TMEM35A/NACHO-mediated proper subunit assembly and trafficking to the cell membrane. At least in chromaffin cells.

The protein resides in the postsynaptic cell membrane. It localises to the cell membrane. The enzyme catalyses Ca(2+)(in) = Ca(2+)(out). It catalyses the reaction K(+)(in) = K(+)(out). The catalysed reaction is Na(+)(in) = Na(+)(out). It carries out the reaction choline(out) = choline(in). The enzyme catalyses NH4(+)(in) = NH4(+)(out). It catalyses the reaction L-arginine(in) = L-arginine(out). The catalysed reaction is guanidine(out) = guanidine(in). Its activity is regulated as follows. Activated by a myriad of ligands such as acetylcholine, cytisine, nicotine, choline and epibatidine. Oligomeric amyloid-beta protein 42 activates specifially CHRNA7:CHRNB2 nAchRs. Activity is modulated by positive allosteric modulators (PAMs), such as flavonoids, with a wide range of chemical diversity, pharmacological sensitivity and efficacy. AChR activity is inhibited by the antagonists alpha-conotoxons RgIA, ImI and ImII, small disulfide-constrained peptides from cone snails. Alpha-conotoxin PnIC selectively inhibits CHRNA7:CHRNB2 over CHRNA7 homopentamer. In terms of biological role, component of neuronal acetylcholine receptors (nAChRs) that function as pentameric, ligand-gated cation channels with high calcium permeability among other activities. nAChRs are excitatory neurotrasnmitter receptors formed by a collection of nAChR subunits known to mediate synaptic transmission in the nervous system and the neuromuscular junction. Each nAchR subunit confers differential attributes to channel properties, including activation, deactivation and desensitization kinetics, pH sensitivity, cation permeability, and binding to allosteric modulators. CHRNA7 forms homopentameric neuronal acetylcholine receptors abundantly expressed in the central nervous system, characterized by fast desensitization and high calcium permeability. Also forms heteropentamers with CHRNB2, mainly expressed in basal forebrain cholinergic neurons. Involved in the modulation of calcium-dependent signaling pathways and influences the release of neurotransmitters, including dopamine, glutamate and GABA. Also expressed in non-neuronal cells such as immune cells like lymphocytes, monocytes and macrophages. In T cells, activation induces metabotropic signaling that results in an increase of intracellular Ca2+ concentrations, independent of ionotropic receptor functions. In macrophages, required for acetylcholine-mediated inhibition of TNF and other inflammatory cytokine release. Once activated by acetylcholine, nicotine or other agonists, selectively inhibits production of pro-inflammatory cytokines while leaving anti-inflammatory cytokines undisturbed. Stimulates the cholinergic anti-inflammatory pathway, controlling inflammation by inhibiting NFKB nuclear translocation and activating the JAK2-STAT3 pathway, independently of ion channel activity. Also expressed in the urothelium where it modulates reflex bladder activity by increasing intracellular calcium through internal stores and decreasing basal ATP release. The protein is Neuronal acetylcholine receptor subunit alpha-7 (CHRNA7) of Bos taurus (Bovine).